The chain runs to 338 residues: Ketol-acid reductoisomerase (NADP(+)) (338 aa).

One can recognise a KARI N-terminal Rossmann domain in the interval 1-181; the sequence is MNVFYDKDAD…GGGRAGIIET (181 aa). NADP(+) is bound by residues 24–27, Arg-47, and Ser-52; that span reads YGSQ. Residue His-107 is part of the active site. Gly-133 contacts NADP(+). A KARI C-terminal knotted domain is found at 182-327; the sequence is NFREETETDL…AKLRAMMPWI (146 aa). Residues Asp-190, Glu-194, Glu-226, and Glu-230 each contribute to the Mg(2+) site. Ser-251 lines the substrate pocket.

The protein belongs to the ketol-acid reductoisomerase family. Mg(2+) serves as cofactor.

The enzyme catalyses (2R)-2,3-dihydroxy-3-methylbutanoate + NADP(+) = (2S)-2-acetolactate + NADPH + H(+). The catalysed reaction is (2R,3R)-2,3-dihydroxy-3-methylpentanoate + NADP(+) = (S)-2-ethyl-2-hydroxy-3-oxobutanoate + NADPH + H(+). It participates in amino-acid biosynthesis; L-isoleucine biosynthesis; L-isoleucine from 2-oxobutanoate: step 2/4. The protein operates within amino-acid biosynthesis; L-valine biosynthesis; L-valine from pyruvate: step 2/4. In terms of biological role, involved in the biosynthesis of branched-chain amino acids (BCAA). Catalyzes an alkyl-migration followed by a ketol-acid reduction of (S)-2-acetolactate (S2AL) to yield (R)-2,3-dihydroxy-isovalerate. In the isomerase reaction, S2AL is rearranged via a Mg-dependent methyl migration to produce 3-hydroxy-3-methyl-2-ketobutyrate (HMKB). In the reductase reaction, this 2-ketoacid undergoes a metal-dependent reduction by NADPH to yield (R)-2,3-dihydroxy-isovalerate. In Burkholderia multivorans (strain ATCC 17616 / 249), this protein is Ketol-acid reductoisomerase (NADP(+)).